Consider the following 74-residue polypeptide: Kappa-scoloptoxin(03)-Ssm1a (74 aa).

A signal peptide spans 1–23; that stretch reads MNSSIAILLVMALIMFSLDKSYS. 3 cysteine pairs are disulfide-bonded: Cys-32–Cys-59, Cys-42–Cys-58, and Cys-45–Cys-68.

This sequence belongs to the scoloptoxin-03 family. As to expression, expressed by the venom gland.

Its subcellular location is the secreted. This toxin inhibits voltage-gated potassium channel currents in DRG neurons (IC(50)=44.2 nM). In vivo, insects injected with this toxin showed signs of neurotoxicity including twitching, paralysis, and body contraction. The protein is Kappa-scoloptoxin(03)-Ssm1a of Scolopendra mutilans (Chinese red-headed centipede).